The chain runs to 301 residues: Ornithine carbamoyltransferase (301 aa).

Carbamoyl phosphate contacts are provided by residues R100 and 127–130; that span reads HPCQ. Residues N158, D221, and 225-226 contribute to the L-ornithine site; that span reads SM. Carbamoyl phosphate contacts are provided by C260 and R288.

This sequence belongs to the aspartate/ornithine carbamoyltransferase superfamily. OTCase family.

It is found in the cytoplasm. The catalysed reaction is carbamoyl phosphate + L-ornithine = L-citrulline + phosphate + H(+). It functions in the pathway amino-acid biosynthesis; L-arginine biosynthesis; L-arginine from L-ornithine and carbamoyl phosphate: step 1/3. Its function is as follows. Reversibly catalyzes the transfer of the carbamoyl group from carbamoyl phosphate (CP) to the N(epsilon) atom of ornithine (ORN) to produce L-citrulline. In Vibrio sp. (strain 2693), this protein is Ornithine carbamoyltransferase (argF).